The primary structure comprises 171 residues: Non-specific lipid transfer protein GPI-anchored 19 (171 aa).

A signal peptide spans 1-18; the sequence is MILAILALVIATFLYGGA. 4 cysteine pairs are disulfide-bonded: C25–C66, C35–C50, C51–C93, and C64–C103. Residues N72 and N82 are each glycosylated (N-linked (GlcNAc...) asparagine). A disordered region spans residues 113–149; sequence LPANTPVGSPRSAPSPSGTTSPANTPSGSKKFPLSNE. Positions 118–141 are enriched in low complexity; that stretch reads PVGSPRSAPSPSGTTSPANTPSGS. S147 is lipidated: GPI-anchor amidated serine. A glycan (N-linked (GlcNAc...) asparagine) is linked at N148. The propeptide at 148–171 is removed in mature form; that stretch reads NESSSKSNVIILSFVSIALVLAII.

Belongs to the plant LTP family.

The protein localises to the cell membrane. Functionally, probable lipid transfer protein. This chain is Non-specific lipid transfer protein GPI-anchored 19, found in Arabidopsis thaliana (Mouse-ear cress).